The chain runs to 178 residues: Large ribosomal subunit protein uL5 (178 aa).

This sequence belongs to the universal ribosomal protein uL5 family. In terms of assembly, part of the 50S ribosomal subunit; part of the 5S rRNA/L5/L18/L25 subcomplex. Contacts the 5S rRNA and the P site tRNA. Forms a bridge to the 30S subunit in the 70S ribosome.

This is one of the proteins that bind and probably mediate the attachment of the 5S RNA into the large ribosomal subunit, where it forms part of the central protuberance. In the 70S ribosome it contacts protein S13 of the 30S subunit (bridge B1b), connecting the 2 subunits; this bridge is implicated in subunit movement. Contacts the P site tRNA; the 5S rRNA and some of its associated proteins might help stabilize positioning of ribosome-bound tRNAs. The protein is Large ribosomal subunit protein uL5 of Syntrophomonas wolfei subsp. wolfei (strain DSM 2245B / Goettingen).